The chain runs to 756 residues: Sodium/hydrogen exchanger 8 (756 aa).

Over 1–31 (MTSIIGAALPYKSPEKAIASSSYSAENDSSP) the chain is Extracellular. The N-linked (GlcNAc...) asparagine glycan is linked to asparagine 27. The helical transmembrane segment at 32 to 52 (VDAVIFAGTSLVLGTACRYLF) threads the bilayer. Residues 53–56 (NGTR) are Cytoplasmic-facing. The chain crosses the membrane as a helical span at residues 57–77 (VPYTVVLLVIGIFLGSLEYGT). Over 78-89 (KHNLGKLGHGIR) the chain is Extracellular. Residues 90–110 (IWNGINPDLLLAVFLPVLLFE) form a helical membrane-spanning segment. Residues 111–125 (SSFSMDVHQIKRCMG) lie on the Cytoplasmic side of the membrane. Residues 126–146 (QMVLLAGPGVLISTFCLGALI) traverse the membrane as a helical segment. At 147–157 (KLTFPYNWDWK) the chain is on the extracellular side. Residues 158–178 (TSLLLGGLLGATDPVAVVALL) traverse the membrane as a helical segment. The Cytoplasmic segment spans residues 179 to 194 (KELGASKKMTTLIDGE). A helical transmembrane segment spans residues 195 to 215 (SLMNDGVSVVVFQLFFKMVMG). Over 216-225 (HNSDWGSIIK) the chain is Extracellular. The helical transmembrane segment at 226 to 248 (FLVQNSFGAVGIGLAFGIASVFW) threads the bilayer. At 249 to 251 (LKF) the chain is on the cytoplasmic side. A helical membrane pass occupies residues 252-271 (IFNDTVAQITVTLSASYFAY). Topologically, residues 272 to 276 (YTAQE) are extracellular. A helical membrane pass occupies residues 277–297 (WAGVSGILTVMILGMFFAAFA). The Cytoplasmic portion of the chain corresponds to 298-311 (RTAFKGDSHQSLHH). Residues 312–332 (FWEMAAYIANTLVFMLSGVII) form a helical membrane-spanning segment. The Extracellular portion of the chain corresponds to 333–350 (AESVLSGQTISYKGNSWS). Residues 351–371 (FLFLLYLYVQLSRCVVVGVLY) form a helical membrane-spanning segment. The Cytoplasmic segment spans residues 372 to 385 (PLLCRSGYGLDWKE). The helical transmembrane segment at 386–406 (SIILTWSGLRGAVSLSLALSV) threads the bilayer. The Extracellular segment spans residues 407 to 422 (KQSSGNSYLSSDTGTR). Residues 423–443 (FLFLTGGIVFLTLVVNGSTTQ) traverse the membrane as a helical segment. Residues 444-756 (LLLHLLRMDT…RSLAIGETDA (313 aa)) are Cytoplasmic-facing.

Belongs to the monovalent cation:proton antiporter 1 (CPA1) transporter (TC 2.A.36) family.

It is found in the cell membrane. The catalysed reaction is Na(+)(in) + H(+)(out) = Na(+)(out) + H(+)(in). The enzyme catalyses K(+)(in) + H(+)(out) = K(+)(out) + H(+)(in). Its function is as follows. May act in low affinity electroneutral exchange of protons for cations such as Na(+) or K(+) across membranes. May also exchange Li(+) and Cs(+) with a lower affinity. This is Sodium/hydrogen exchanger 8 (NHX8) from Arabidopsis thaliana (Mouse-ear cress).